The chain runs to 364 residues: Growth hormone secretagogue receptor type 1 (364 aa).

At 1–40 (MWNATPSEEPEPNVTLDLDWDASPGNDSLPDELLPLFPAP) the chain is on the extracellular side. Asparagine 13 and asparagine 26 each carry an N-linked (GlcNAc...) asparagine glycan. Residues 41 to 66 (LLAGVTATCVALFVVGISGNLLTMLV) traverse the membrane as a helical segment. At 67 to 72 (VSRFRE) the chain is on the cytoplasmic side. Residues 73 to 96 (LRTTTNLYLSSMAFSDLLIFLCMP) traverse the membrane as a helical segment. The Extracellular portion of the chain corresponds to 97 to 117 (LDLVRLWQYRPWNFGDLLCKL). A disulfide bond links cysteine 115 and cysteine 197. Residues 118 to 139 (FQFVSESCTYATVLTITALSVE) traverse the membrane as a helical segment. Residues 140-162 (RYFAICFPLRAKVVVTKGRVKLV) are Cytoplasmic-facing. A helical membrane pass occupies residues 163 to 183 (ILVIWAVAFCSAGPIFVLVGV). At 184 to 211 (EHENGTDPRDTNECRATEFAVRSGLLTV) the chain is on the extracellular side. Asparagine 187 carries an N-linked (GlcNAc...) asparagine glycan. The helical transmembrane segment at 212 to 235 (MVWVSSVFFFLPVFCLTVLYSLIG) threads the bilayer. The Cytoplasmic portion of the chain corresponds to 236 to 263 (RKLWRRRGDAAVGASLRDQNHKQTVKML). Residues 264–285 (AVVVFAFILCWLPFHVGRYLFS) form a helical membrane-spanning segment. Topologically, residues 286–302 (KSFEPGSLEIAQISQYC) are extracellular. A helical membrane pass occupies residues 303–326 (NLVSFVLFYLSAAINPILYNIMSK). At 327 to 364 (KYRVAVFKLLGFESFSQRKLSTLKDESSRAWTKSSINT) the chain is on the cytoplasmic side.

The protein belongs to the G-protein coupled receptor 1 family.

The protein localises to the cell membrane. In terms of biological role, receptor for ghrelin, coupled to G-alpha-11 proteins. Stimulates growth hormone secretion. Also binds other growth hormone releasing peptides (GHRP) (e.g. Met-enkephalin and GHRP-6) as well as non-peptide, low molecular weight secretagogues (e.g. L-692,429, MK-0677, adenosine). This is Growth hormone secretagogue receptor type 1 (Ghsr) from Rattus norvegicus (Rat).